Consider the following 354-residue polypeptide: Methionine aminotransferase BCAT4 (354 aa).

Lysine 198 bears the N6-(pyridoxal phosphate)lysine mark.

The protein belongs to the class-IV pyridoxal-phosphate-dependent aminotransferase family. Pyridoxal 5'-phosphate serves as cofactor. In terms of tissue distribution, mostly expressed in phloem.

The protein resides in the cytoplasm. It catalyses the reaction a 2-oxocarboxylate + L-methionine = 4-methylsulfanyl-2-oxobutanoate + an L-alpha-amino acid. Functionally, converts 2-oxo acids to branched-chain amino acids. Shows activity with L-Leu, L-Ile and L-Val as amino donors and alpha-keto-glutarate as an amino acceptor, but no activity for D-isomers of Leu, Ile, Val, Asp, Glu or Ala. Acts on methionine and its derivatives and the corresponding 2-oxo acids. Catalyzes the initial deamination of methionine to 4-methylthio-2-oxobutyrate as well as the transamination of other typical intermediates of the methionine chain elongation pathway. This is Methionine aminotransferase BCAT4 (BCAT4) from Arabidopsis thaliana (Mouse-ear cress).